Here is a 375-residue protein sequence, read N- to C-terminus: Xylose transport system permease protein XylH (375 aa).

The next 10 membrane-spanning stretches (helical) occupy residues 9 to 29 (LQVY…SVAT), 52 to 72 (LAIG…VGSL), 85 to 105 (VWWG…GLIF), 118 to 138 (VPSF…LIGL), 159 to 179 (LSDI…VLWG), 199 to 219 (DFTK…LLND), 220 to 240 (YRGI…GLFL), 271 to 291 (KLII…ILSA), 319 to 339 (LAGG…IASL), and 348 to 368 (VPTF…VWID).

Belongs to the binding-protein-dependent transport system permease family. AraH/RbsC subfamily.

The protein localises to the cell inner membrane. Part of the binding-protein-dependent transport system for D-xylose. Probably responsible for the translocation of the substrate across the membrane. The sequence is that of Xylose transport system permease protein XylH (xylH) from Haemophilus influenzae (strain ATCC 51907 / DSM 11121 / KW20 / Rd).